Here is a 434-residue protein sequence, read N- to C-terminus: Glutamate-1-semialdehyde 2,1-aminomutase (434 aa).

K267 is modified (N6-(pyridoxal phosphate)lysine).

It belongs to the class-III pyridoxal-phosphate-dependent aminotransferase family. HemL subfamily. In terms of assembly, homodimer. Pyridoxal 5'-phosphate is required as a cofactor.

The protein localises to the cytoplasm. The enzyme catalyses (S)-4-amino-5-oxopentanoate = 5-aminolevulinate. The protein operates within porphyrin-containing compound metabolism; protoporphyrin-IX biosynthesis; 5-aminolevulinate from L-glutamyl-tRNA(Glu): step 2/2. It participates in porphyrin-containing compound metabolism; chlorophyll biosynthesis. This is Glutamate-1-semialdehyde 2,1-aminomutase from Roseiflexus castenholzii (strain DSM 13941 / HLO8).